The primary structure comprises 402 residues: Non-structural protein 3 (402 aa).

Coiled-coil stretches lie at residues L87–E113 and K147–E181. The DRBM domain occupies P334–M402.

The protein belongs to the rotavirus NSP3 family.

Its subcellular location is the host cytoplasm. In terms of biological role, may play a role in stimulating the translation of viral mRNAs. The protein is Non-structural protein 3 of Bos taurus (Bovine).